The primary structure comprises 440 residues: UDP-N-acetylmuramoylalanine--D-glutamate ligase (440 aa).

109-115 provides a ligand contact to ATP; that stretch reads GTNGKTT.

Belongs to the MurCDEF family.

It localises to the cytoplasm. It catalyses the reaction UDP-N-acetyl-alpha-D-muramoyl-L-alanine + D-glutamate + ATP = UDP-N-acetyl-alpha-D-muramoyl-L-alanyl-D-glutamate + ADP + phosphate + H(+). It participates in cell wall biogenesis; peptidoglycan biosynthesis. Functionally, cell wall formation. Catalyzes the addition of glutamate to the nucleotide precursor UDP-N-acetylmuramoyl-L-alanine (UMA). This chain is UDP-N-acetylmuramoylalanine--D-glutamate ligase, found in Rubrobacter xylanophilus (strain DSM 9941 / JCM 11954 / NBRC 16129 / PRD-1).